The following is a 269-amino-acid chain: Hydroxyethylthiazole kinase (269 aa).

Methionine 41 lines the substrate pocket. ATP is bound by residues arginine 117 and serine 165. Substrate is bound at residue glycine 192.

This sequence belongs to the Thz kinase family. The cofactor is Mg(2+).

The enzyme catalyses 5-(2-hydroxyethyl)-4-methylthiazole + ATP = 4-methyl-5-(2-phosphooxyethyl)-thiazole + ADP + H(+). It participates in cofactor biosynthesis; thiamine diphosphate biosynthesis; 4-methyl-5-(2-phosphoethyl)-thiazole from 5-(2-hydroxyethyl)-4-methylthiazole: step 1/1. Functionally, catalyzes the phosphorylation of the hydroxyl group of 4-methyl-5-beta-hydroxyethylthiazole (THZ). The protein is Hydroxyethylthiazole kinase of Actinobacillus succinogenes (strain ATCC 55618 / DSM 22257 / CCUG 43843 / 130Z).